Here is a 201-residue protein sequence, read N- to C-terminus: MAAKSKKILLQNLNSFVLDSILAIKDGEETPQSDASLVANLRKQWESSEFQKKMAVEVFGIKGKNLTPGPKRNKSAYMFFCQDMRQNIVADNPDCKPHQIMSLLGCKWRELTTKQKSQYYKQAADDKERYLDDKELEKRRNKTPSKLSSYFLFCEDERPIVKKEFPNMSTKKVTAECGKRWNEMKINDPKKYKYYVEKAAK.

2 consecutive DNA-binding regions (HMG box) follow at residues 70-138 (PKRN…ELEK) and 143-201 (TPSK…KAAK).

It belongs to the IIV-6 401R family.

The protein resides in the host nucleus. The protein is High mobility group protein homolog 068R of Invertebrate iridescent virus 3 (IIV-3).